We begin with the raw amino-acid sequence, 179 residues long: MARLQQFYKETIVSDLVKQFGYKSVMEVPRITKITLNMGVGEAVADKKVLENAVGDMQKIAGQKPVTTKARKSIAGFKIRDGYPIGCMVTLRGPRMFEFLDRLVTIALPRVRDFRGISGKGFDGQGNYNMGVKEQIIFPEIEYDKIDALRGMNISITTTAKTDAEAKALLVAFKFPFKN.

It belongs to the universal ribosomal protein uL5 family. As to quaternary structure, part of the 50S ribosomal subunit; part of the 5S rRNA/L5/L18/L25 subcomplex. Contacts the 5S rRNA and the P site tRNA. Forms a bridge to the 30S subunit in the 70S ribosome.

Functionally, this is one of the proteins that bind and probably mediate the attachment of the 5S RNA into the large ribosomal subunit, where it forms part of the central protuberance. In the 70S ribosome it contacts protein S13 of the 30S subunit (bridge B1b), connecting the 2 subunits; this bridge is implicated in subunit movement. Contacts the P site tRNA; the 5S rRNA and some of its associated proteins might help stabilize positioning of ribosome-bound tRNAs. This Dechloromonas aromatica (strain RCB) protein is Large ribosomal subunit protein uL5.